A 212-amino-acid chain; its full sequence is Ribosomal RNA small subunit methyltransferase G (212 aa).

S-adenosyl-L-methionine contacts are provided by residues glycine 80, leucine 85, 131-132, and arginine 146; that span reads VE.

It belongs to the methyltransferase superfamily. RNA methyltransferase RsmG family.

It is found in the cytoplasm. It carries out the reaction guanosine(527) in 16S rRNA + S-adenosyl-L-methionine = N(7)-methylguanosine(527) in 16S rRNA + S-adenosyl-L-homocysteine. Specifically methylates the N7 position of guanine in position 527 of 16S rRNA. This chain is Ribosomal RNA small subunit methyltransferase G, found in Azoarcus sp. (strain BH72).